We begin with the raw amino-acid sequence, 465 residues long: Siroheme synthase (465 aa).

The interval 1-203 (MDFLPLFHSL…GRPAEAERLL (203 aa)) is precorrin-2 dehydrogenase /sirohydrochlorin ferrochelatase. NAD(+)-binding positions include 22–23 (EV) and 43–44 (PQ). S128 is modified (phosphoserine). The interval 217–465 (GEVYLVGAGP…AWFEGAREGA (249 aa)) is uroporphyrinogen-III C-methyltransferase. P226 is a binding site for S-adenosyl-L-methionine. The active-site Proton acceptor is the D249. The active-site Proton donor is the K271. S-adenosyl-L-methionine-binding positions include 302–304 (GGD), I307, 332–333 (TA), M384, and G413.

In the N-terminal section; belongs to the precorrin-2 dehydrogenase / sirohydrochlorin ferrochelatase family. This sequence in the C-terminal section; belongs to the precorrin methyltransferase family.

The catalysed reaction is uroporphyrinogen III + 2 S-adenosyl-L-methionine = precorrin-2 + 2 S-adenosyl-L-homocysteine + H(+). The enzyme catalyses precorrin-2 + NAD(+) = sirohydrochlorin + NADH + 2 H(+). It catalyses the reaction siroheme + 2 H(+) = sirohydrochlorin + Fe(2+). It functions in the pathway cofactor biosynthesis; adenosylcobalamin biosynthesis; precorrin-2 from uroporphyrinogen III: step 1/1. Its pathway is cofactor biosynthesis; adenosylcobalamin biosynthesis; sirohydrochlorin from precorrin-2: step 1/1. It participates in porphyrin-containing compound metabolism; siroheme biosynthesis; precorrin-2 from uroporphyrinogen III: step 1/1. The protein operates within porphyrin-containing compound metabolism; siroheme biosynthesis; siroheme from sirohydrochlorin: step 1/1. It functions in the pathway porphyrin-containing compound metabolism; siroheme biosynthesis; sirohydrochlorin from precorrin-2: step 1/1. Multifunctional enzyme that catalyzes the SAM-dependent methylations of uroporphyrinogen III at position C-2 and C-7 to form precorrin-2 via precorrin-1. Then it catalyzes the NAD-dependent ring dehydrogenation of precorrin-2 to yield sirohydrochlorin. Finally, it catalyzes the ferrochelation of sirohydrochlorin to yield siroheme. The chain is Siroheme synthase from Pseudomonas paraeruginosa (strain DSM 24068 / PA7) (Pseudomonas aeruginosa (strain PA7)).